Consider the following 565-residue polypeptide: Galactoside 2-alpha-L-fucosyltransferase (565 aa).

The Cytoplasmic segment spans residues 1–43; sequence MNMLIKRVIAIKNPRGDDNNNNKLSDLETLTDKCTTCPLTLMR. A helical; Signal-anchor for type II membrane protein membrane pass occupies residues 44-64; that stretch reads VMAFFVVSFMLFSVLFSLSVV. The Lumenal segment spans residues 65–565; the sequence is LRDPPSDAAI…MSWGLKLVDN (501 aa). N-linked (GlcNAc...) asparagine glycosylation is found at N159, N263, N407, and N509.

The protein belongs to the glycosyltransferase 37 family.

It localises to the golgi apparatus. The protein localises to the golgi stack membrane. Its pathway is protein modification; protein glycosylation. In terms of biological role, involved in cell wall biosynthesis. Adds the terminal fucosyl residue on xyloglucan side chains. The polypeptide is Galactoside 2-alpha-L-fucosyltransferase (FT1) (Pisum sativum (Garden pea)).